Here is a 124-residue protein sequence, read N- to C-terminus: MAKKKAKKSIAKGVVYVAATFNNTVITVTDEMGNVISWSSAGALGFKGSKKSTPFAATEAVADAMAKAKENGIKEVGIKVQGPGSGRDTAVKAIGATEGIRVTFLKDITPLPHNGCRPPKKRRV.

This sequence belongs to the universal ribosomal protein uS11 family. As to quaternary structure, part of the 30S ribosomal subunit. Interacts with proteins S7 and S18. Binds to IF-3.

Functionally, located on the platform of the 30S subunit, it bridges several disparate RNA helices of the 16S rRNA. Forms part of the Shine-Dalgarno cleft in the 70S ribosome. In Sulfurovum sp. (strain NBC37-1), this protein is Small ribosomal subunit protein uS11.